A 150-amino-acid chain; its full sequence is Large ribosomal subunit protein uL13 (150 aa).

This sequence belongs to the universal ribosomal protein uL13 family. Part of the 50S ribosomal subunit.

Its function is as follows. This protein is one of the early assembly proteins of the 50S ribosomal subunit, although it is not seen to bind rRNA by itself. It is important during the early stages of 50S assembly. In Chlorobium phaeobacteroides (strain BS1), this protein is Large ribosomal subunit protein uL13.